A 102-amino-acid chain; its full sequence is UPF0235 protein Swol_0959 (102 aa).

The protein belongs to the UPF0235 family.

This Syntrophomonas wolfei subsp. wolfei (strain DSM 2245B / Goettingen) protein is UPF0235 protein Swol_0959.